A 504-amino-acid polypeptide reads, in one-letter code: Cytochrome P450 4A24 (504 aa).

Helical transmembrane passes span 6-26 (LASA…LLLL) and 112-132 (VVYR…NGQT). A heme-binding site is contributed by C451.

The protein belongs to the cytochrome P450 family. The cofactor is heme.

Its subcellular location is the endoplasmic reticulum membrane. It carries out the reaction an omega-methyl-long-chain fatty acid + reduced [NADPH--hemoprotein reductase] + O2 = an omega-hydroxy-long-chain fatty acid + oxidized [NADPH--hemoprotein reductase] + H2O + H(+). Functionally, catalyzes the omega- and (omega-1)-hydroxylation of various fatty acids such as laurate and palmitate. Has no activity toward taurochenodeoxycholic acid. This Sus scrofa (Pig) protein is Cytochrome P450 4A24 (CYP4A24).